The chain runs to 316 residues: uncharacterized protein (316 aa).

Over 1–70 the chain is Cytoplasmic; sequence SFAYSGNSES…NNDEIGIWNY (70 aa). A helical membrane pass occupies residues 71–91; it reads ISVAEMGGVLLFLSYWIWTCL. Residue His-92 is a topological domain, lumenal. A helical membrane pass occupies residues 93-113; that stretch reads FSKIIFPAQKVICLYIFLFAL. Topologically, residues 114-170 are cytoplasmic; it reads NQTLQECIEEYVFSSECIKYRQFYSVYEIIDFLRTNFYRLFVIYCALGFGITRTVPK. A helical membrane pass occupies residues 171 to 191; sequence YLMIKGISIVIALCSVYWISL. At 192 to 194 the chain is on the lumenal side; the sequence is YKD. Residues 195–215 form a helical membrane-spanning segment; that stretch reads VYVVSEIFDMIQYEVSPAIWV. At 216–245 the chain is on the cytoplasmic side; the sequence is YSICHLLKQCTSVTTYENASKARFFRRMLN. A helical transmembrane segment spans residues 246 to 266; sequence AFIFIFCASPMLHYLSNIIFG. The Lumenal portion of the chain corresponds to 267 to 316; it reads NFDYRLSVIIGDLFTFMEKIAFPCYIMFPTHNEALAYNRNVAEEAQEKMI.

The protein belongs to the UPF0742 family.

It localises to the endoplasmic reticulum. The protein resides in the membrane. This is an uncharacterized protein from Schizosaccharomyces pombe (strain 972 / ATCC 24843) (Fission yeast).